Here is a 130-residue protein sequence, read N- to C-terminus: Small ribosomal subunit protein uS11 (130 aa).

It belongs to the universal ribosomal protein uS11 family. In terms of assembly, part of the 30S ribosomal subunit. Interacts with proteins S7 and S18. Binds to IF-3.

In terms of biological role, located on the platform of the 30S subunit, it bridges several disparate RNA helices of the 16S rRNA. Forms part of the Shine-Dalgarno cleft in the 70S ribosome. In Syntrophomonas wolfei subsp. wolfei (strain DSM 2245B / Goettingen), this protein is Small ribosomal subunit protein uS11.